The sequence spans 1034 residues: Protein ITPRID1 (1034 aa).

Disordered stretches follow at residues 223-290 (KTQQ…PTKP), 442-486 (QVSS…KSMT), and 624-678 (QSSL…SSWS). Polar residues-rich tracts occupy residues 443–453 (VSSMTGSQSPT) and 465–476 (HSPASQQDSLQE). Over residues 477 to 486 (SYGSKSKSMT) the composition is skewed to low complexity. Polar residues predominate over residues 669–678 (TDSNAASSWS). A coiled-coil region spans residues 843 to 902 (EMETMKMVCQSFREHLEEIEQHFMGQQALYPRDMSEEEREEAEYLRTLREALRQQVAELA).

This chain is Protein ITPRID1 (Itprid1), found in Mus musculus (Mouse).